Reading from the N-terminus, the 273-residue chain is Vitamin B12-binding protein (273 aa).

Positions 1 to 18 are cleaved as a signal peptide; that stretch reads MMKTLSSLLLLFSVSLQA. One can recognise a Fe/B12 periplasmic-binding domain in the interval 23-273; the sequence is RVISLAPHAT…EHFASIEQKR (251 aa). Cysteines 183 and 263 form a disulfide.

Belongs to the BtuF family. As to quaternary structure, the complex is composed of two ATP-binding proteins (BtuD), two transmembrane proteins (BtuC) and a solute-binding protein (BtuF).

The protein resides in the periplasm. Functionally, part of the ABC transporter complex BtuCDF involved in vitamin B12 import. Binds vitamin B12 and delivers it to the periplasmic surface of BtuC. The sequence is that of Vitamin B12-binding protein from Vibrio vulnificus (strain CMCP6).